Consider the following 73-residue polypeptide: Large ribosomal subunit protein bL31 (73 aa).

This sequence belongs to the bacterial ribosomal protein bL31 family. Type A subfamily. In terms of assembly, part of the 50S ribosomal subunit.

Binds the 23S rRNA. The polypeptide is Large ribosomal subunit protein bL31 (Bartonella henselae (strain ATCC 49882 / DSM 28221 / CCUG 30454 / Houston 1) (Rochalimaea henselae)).